The following is a 458-amino-acid chain: Tubulin beta chain (458 aa).

8 residues coordinate GTP: Gln11, Glu69, Ser138, Gly142, Thr143, Gly144, Asn204, and Asn226. Glu69 is a binding site for Mg(2+). A disordered region spans residues Glu426–Ala458. The segment covering Glu431–Ala440 has biased composition (acidic residues).

It belongs to the tubulin family. As to quaternary structure, dimer of alpha and beta chains. A typical microtubule is a hollow water-filled tube with an outer diameter of 25 nm and an inner diameter of 15 nM. Alpha-beta heterodimers associate head-to-tail to form protofilaments running lengthwise along the microtubule wall with the beta-tubulin subunit facing the microtubule plus end conferring a structural polarity. Microtubules usually have 13 protofilaments but different protofilament numbers can be found in some organisms and specialized cells. The cofactor is Mg(2+).

The protein resides in the cytoplasm. It localises to the cytoskeleton. Its function is as follows. Tubulin is the major constituent of microtubules, a cylinder consisting of laterally associated linear protofilaments composed of alpha- and beta-tubulin heterodimers. Microtubules grow by the addition of GTP-tubulin dimers to the microtubule end, where a stabilizing cap forms. Below the cap, tubulin dimers are in GDP-bound state, owing to GTPase activity of alpha-tubulin. The chain is Tubulin beta chain (TUBB1) from Pyropia yezoensis (Susabi-nori).